The primary structure comprises 234 residues: Demethylmenaquinone methyltransferase (234 aa).

S-adenosyl-L-methionine contacts are provided by residues threonine 58, aspartate 79, and 106 to 107 (NA).

Belongs to the class I-like SAM-binding methyltransferase superfamily. MenG/UbiE family.

The catalysed reaction is a 2-demethylmenaquinol + S-adenosyl-L-methionine = a menaquinol + S-adenosyl-L-homocysteine + H(+). It participates in quinol/quinone metabolism; menaquinone biosynthesis; menaquinol from 1,4-dihydroxy-2-naphthoate: step 2/2. Its function is as follows. Methyltransferase required for the conversion of demethylmenaquinol (DMKH2) to menaquinol (MKH2). In Geobacillus kaustophilus (strain HTA426), this protein is Demethylmenaquinone methyltransferase.